Consider the following 98-residue polypeptide: uncharacterized protein (98 aa).

This is an uncharacterized protein from Rickettsia prowazekii (strain Madrid E).